A 416-amino-acid polypeptide reads, in one-letter code: Basic salivary proline-rich protein 2 (416 aa).

Positions 1-16 are cleaved as a signal peptide; the sequence is MLLILLSVALLALSSA. Position 17 is a pyrrolidone carboxylic acid (glutamine 17). Residues 19–28 are compositionally biased toward polar residues; sequence LNEDVSQEES. Residues 19–416 are disordered; that stretch reads LNEDVSQEES…QGGRPSRPPQ (398 aa). At serine 24 the chain carries Phosphoserine. The span at 34 to 47 shows a compositional bias: low complexity; it reads GNPQGAPPQGGNKP. Composition is skewed to pro residues over residues 48 to 104 and 112 to 165; these read QGPP…PPPQ and RSPP…PPPQ. Serine 52 is subject to Phosphoserine. 15 tandem repeats follow at residues 53-72, 74-93, 94-113, 114-133, 135-154, 155-174, 176-195, 197-216, 217-236, 238-257, 259-278, 279-298, 300-319, 321-340, and 341-360. The interval 53–360 is 15 X 20 AA approximate tandem repeats of P-P-G-K-P-Q-G-P-P-P-Q-G-[GD]-[NKS]-[KSQ]-[PRS]-[QRS] [GPS]-[PSAR]-[PSR]; that stretch reads PPGKPQGPPP…QGGSKSRSAR (308 aa). N-linked (GlcNAc...) asparagine glycosylation occurs at asparagine 168. Residues 177–227 are compositionally biased toward pro residues; that stretch reads PGKPQGPPPQGGNQPQGPPPPPGKPQGPPPQGGNKPQGPPPPGKPQGPPPQ. Asparagine 230 carries N-linked (GlcNAc...) asparagine glycosylation. Serine 232 carries an O-linked (Hex) serine glycan. Positions 239–289 are enriched in pro residues; it reads PGKPQGPPPQGGNQPQGPPPPPGKPQGPPPQGGNKPQGPPPPGKPQGPPPQ. Residue asparagine 272 is glycosylated (N-linked (GlcNAc...) asparagine). Over residues 290–300 the composition is skewed to low complexity; the sequence is GGSKSRSSRSP. Pro residues-rich tracts occupy residues 301-351 and 378-416; these read PGKP…PPPQ and QGPP…RPPQ.

N- and O-glycosylated. In head and neck cancer patients, O-glycosylated with glucosylgalactosyl carbohydrate moiety. This modification would require prior hydroxylation on the lysine residue. In terms of processing, proteolytically cleaved at the tripeptide Xaa-Pro-Gln, where Xaa in the P(3) position is mostly lysine. The endoprotease may be of microbial origin. Post-translationally, pyroglutamate formation occurs on terminal Gln residues of cleaved peptides. Pyroglutamate formation found on at least Gln-398 and Gln-400.

It is found in the secreted. This Homo sapiens (Human) protein is Basic salivary proline-rich protein 2 (PRB2).